A 571-amino-acid chain; its full sequence is Urease subunit alpha (571 aa).

Positions 133–571 constitute a Urease domain; it reads GGIDTHVHFI…LPLTQRYFLF (439 aa). Positions 138, 140, and 221 each coordinate Ni(2+). An N6-carboxylysine modification is found at Lys-221. Substrate is bound at residue His-223. 2 residues coordinate Ni(2+): His-250 and His-276. Catalysis depends on His-324, which acts as the Proton donor. Asp-364 is a Ni(2+) binding site.

This sequence belongs to the metallo-dependent hydrolases superfamily. Urease alpha subunit family. In terms of assembly, heterotrimer of UreA (gamma), UreB (beta) and UreC (alpha) subunits. Three heterotrimers associate to form the active enzyme. Ni cation is required as a cofactor. In terms of processing, carboxylation allows a single lysine to coordinate two nickel ions.

Its subcellular location is the cytoplasm. The enzyme catalyses urea + 2 H2O + H(+) = hydrogencarbonate + 2 NH4(+). It participates in nitrogen metabolism; urea degradation; CO(2) and NH(3) from urea (urease route): step 1/1. The protein is Urease subunit alpha of Staphylococcus aureus (strain USA300).